The chain runs to 66 residues: uncharacterized protein (66 aa).

2 consecutive transmembrane segments (helical) span residues 5–25 (ALIV…PLVN) and 30–50 (IMFG…VTPL).

It is found in the cell membrane. This is an uncharacterized protein from Bacillus subtilis (strain 168).